Reading from the N-terminus, the 255-residue chain is tRNA (guanine-N(1)-)-methyltransferase (255 aa).

Residues glycine 113 and 133–138 contribute to the S-adenosyl-L-methionine site; that span reads IGDYVL.

This sequence belongs to the RNA methyltransferase TrmD family. In terms of assembly, homodimer.

Its subcellular location is the cytoplasm. The catalysed reaction is guanosine(37) in tRNA + S-adenosyl-L-methionine = N(1)-methylguanosine(37) in tRNA + S-adenosyl-L-homocysteine + H(+). In terms of biological role, specifically methylates guanosine-37 in various tRNAs. The polypeptide is tRNA (guanine-N(1)-)-methyltransferase (Klebsiella pneumoniae (strain 342)).